A 732-amino-acid polypeptide reads, in one-letter code: Elongation factor 2 (732 aa).

One can recognise a tr-type G domain in the interval 19–230 (ERIRNMGIAA…VSFKDIIDLT (212 aa)). GTP-binding positions include 28–35 (AHIDHGKT), 94–98 (DTPGH), and 148–151 (NKVD). Diphthamide is present on histidine 597.

This sequence belongs to the TRAFAC class translation factor GTPase superfamily. Classic translation factor GTPase family. EF-G/EF-2 subfamily.

It is found in the cytoplasm. Functionally, catalyzes the GTP-dependent ribosomal translocation step during translation elongation. During this step, the ribosome changes from the pre-translocational (PRE) to the post-translocational (POST) state as the newly formed A-site-bound peptidyl-tRNA and P-site-bound deacylated tRNA move to the P and E sites, respectively. Catalyzes the coordinated movement of the two tRNA molecules, the mRNA and conformational changes in the ribosome. The polypeptide is Elongation factor 2 (Thermococcus sibiricus (strain DSM 12597 / MM 739)).